Reading from the N-terminus, the 906-residue chain is Glutamate receptor 1 (906 aa).

The first 18 residues, 1–18, serve as a signal peptide directing secretion; that stretch reads MQHIFAFFCTGFLGAVVG. At 19-536 the chain is on the extracellular side; sequence ANFPNNIQIG…GVFSFLDPLA (518 aa). N-linked (GlcNAc...) asparagine glycans are attached at residues asparagine 63, asparagine 249, asparagine 257, asparagine 363, asparagine 401, and asparagine 406. Cysteine 75 and cysteine 323 form a disulfide bridge. Residues proline 492, threonine 494, and arginine 499 each coordinate L-glutamate. A helical membrane pass occupies residues 537–557; that stretch reads YEIWMCIVFAYIGVSVVLFLV. The Cytoplasmic portion of the chain corresponds to 558 to 584; sequence SRFSPYEWHSEEFEEGRDQTTSDQSNE. The helical; Pore-forming intramembrane region spans 585–600; sequence FGIFNSLWFSLGAFMQ. An intramembrane segment occupies 601–603; it reads QGC. Residue cysteine 603 is the site of S-palmitoyl cysteine attachment. Residues 604-609 are Cytoplasmic-facing; the sequence is DISPRS. A helical membrane pass occupies residues 610–630; sequence LSGRIVGGVWWFFTLIIISSY. Over 631–805 the chain is Extracellular; the sequence is TANLAAFLTV…DKTSALSLSN (175 aa). Serine 645 carries the phosphoserine modification. L-glutamate contacts are provided by serine 668 and threonine 669. Phosphoserine is present on serine 710. Glutamate 719 is a binding site for L-glutamate. A disulfide bridge connects residues cysteine 732 and cysteine 787. The helical transmembrane segment at 806–826 threads the bilayer; it reads VAGVFYILIGGLGLAMLVALI. Topologically, residues 827–906 are cytoplasmic; the sequence is EFCYKSRSES…SGMPLGATGL (80 aa). The S-palmitoyl cysteine moiety is linked to residue cysteine 829. Phosphoserine occurs at positions 849 and 863. The interval 861–880 is disordered; it reads RNSGAGASSAGSGENGRVVS. The segment covering 863 to 872 has biased composition (low complexity); the sequence is SGAGASSAGS. The PDZ-binding motif lies at 903-906; the sequence is ATGL.

It belongs to the glutamate-gated ion channel (TC 1.A.10.1) family. GRIA1 subfamily. As to quaternary structure, homotetramer or heterotetramer of pore-forming glutamate receptor subunits; heteromeric assembly can be the result of both receptor subtype and flip-flop forms and according the composition, one partner can be dominant with respect to the fast desensitizing current component, whereas the other can determine the steady-state component. Tetramers may be formed by the dimerization of dimers. Found in a complex with GRIA2, GRIA3, GRIA4, CNIH2, CNIH3, CACNG2, CACNG3, CACNG4, CACNG5, CACNG7 and CACNG8. Interacts with HIP1 and RASGRF2. Interacts with SYNDIG1 and GRIA2. Interacts with DLG1 (via C-terminus). Interacts with LRFN1. Interacts with PRKG2. Interacts with CNIH2 and CACNG2. Interacts with CACNG5; this interaction modulates the gating. Interacts (via C-terminus) with PDLIM4 (via LIM domain); this interaction as well as the interaction of PDLIM4 with alpha-actinin is required for their colocalization in early endosomes. Interacts with SNX27 (via PDZ domain); the interaction is required for recycling to the plasma membrane when endocytosed and prevent degradation in lysosomes. Interacts (via PDZ-binding motif) with SHANK3 (via PDZ domain). Interacts with CACNG3; associates GRIA1 with the adapter protein complex 4 (AP-4) to target GRIA1 to the somatodendritic compartment of neurons. Interacts with CACNG2; this interaction mediates traffick to the plasma membrane and modulation of desensitization. Interaction with CNIH2 and CNIH3; this interaction promotes expression at the plasma membrane and extensively modulates their gating properties by slowing deactivation and desensitization kinetics. Found in a complex with GRIA2, GRIA3, GRIA4, DLG4, CACNG8 and CNIH2. Phosphorylated at Ser-645. Phosphorylated at Ser-710 by PKC. Phosphorylated at Ser-849 by PKC, PKA and CAMK2. Phosphorylated at Ser-863 by PKC, PKA and PRKG2. Phosphorylation of Ser-863 is reduced by induction of long-term depression and increased by induction of long-term potentiation. In terms of processing, palmitoylated. Depalmitoylated by CPT1C and upon L-glutamate stimulation. ZDHHC3/GODZ specifically palmitoylates Cys-603, which leads to Golgi retention and decreased cell surface expression. In contrast, Cys-829 palmitoylation does not affect cell surface expression but regulates stimulation-dependent endocytosis.

It localises to the cell membrane. It is found in the endoplasmic reticulum membrane. Its subcellular location is the postsynaptic cell membrane. The protein localises to the postsynaptic density membrane. The protein resides in the cell projection. It localises to the dendrite. It is found in the dendritic spine. Its subcellular location is the early endosome membrane. The protein localises to the recycling endosome membrane. The protein resides in the presynapse. It localises to the synapse. It catalyses the reaction Ca(2+)(in) = Ca(2+)(out). The enzyme catalyses Na(+)(in) = Na(+)(out). It carries out the reaction Mg(2+)(in) = Mg(2+)(out). The catalysed reaction is Li(+)(in) = Li(+)(out). It catalyses the reaction K(+)(in) = K(+)(out). The enzyme catalyses Sr(2+)(in) = Sr(2+)(out). Its function is as follows. Ionotropic glutamate receptor that functions as a ligand-gated cation channel, gated by L-glutamate and glutamatergic agonists such as alpha-amino-3-hydroxy-5-methyl-4-isoxazolepropionic acid (AMPA), quisqualic acid, and kainic acid. L-glutamate acts as an excitatory neurotransmitter at many synapses in the central nervous system. Binding of the excitatory neurotransmitter L-glutamate induces a conformation change, leading to the opening of the cation channel, and thereby converts the chemical signal to an electrical impulse upon entry of monovalent and divalent cations such as sodium and calcium. The receptor then desensitizes rapidly and enters in a transient inactive state, characterized by the presence of bound agonist. In the presence of CACNG2 or CACNG4 or CACNG7 or CACNG8, shows resensitization which is characterized by a delayed accumulation of current flux upon continued application of L-glutamate. Calcium (Ca(2+)) permeability depends on subunits composition and, heteromeric channels containing edited GRIA2 subunit are calcium-impermeable. Also permeable to other divalents cations such as strontium(2+) and magnesium(2+) and monovalent cations such as potassium(1+) and lithium(1+). The protein is Glutamate receptor 1 of Macaca fascicularis (Crab-eating macaque).